The chain runs to 234 residues: BTB/POZ domain-containing protein KCTD5 (234 aa).

Residue alanine 2 is modified to N-acetylalanine. Serine 10 is modified (phosphoserine). The BTB domain maps to 44 to 146; sequence KWVRLNVGGT…LVKDKIRERD (103 aa). The disordered stretch occupies residues 213-234; the sequence is PYGTASEPSEKAKILQERGSRM. Residues 220-234 are compositionally biased toward basic and acidic residues; sequence PSEKAKILQERGSRM.

In terms of assembly, homopentamer. Interacts (via C-terminus) with GRASP55/GORASP2. Interacts with CUL3 and with ubiquitinated proteins. Interacts with CRY1. As to quaternary structure, (Microbial infection) Interacts with adeno-associated virus 2 (AAV-2) REP proteins.

The protein localises to the cytoplasm. It localises to the cytosol. The protein resides in the nucleus. In terms of biological role, its interaction with CUL3 suggests that it may act as a substrate adapter in some E3 ligase complex. Does not affect the function of Kv channel Kv2.1/KCNB1, Kv1.2/KCNA2, Kv4.2/KCND2 and Kv3.4/KCNC4. The protein is BTB/POZ domain-containing protein KCTD5 (KCTD5) of Homo sapiens (Human).